We begin with the raw amino-acid sequence, 349 residues long: Neutral protease 2 homolog ACLA_052720 (349 aa).

Positions Met-1–Ala-19 are cleaved as a signal peptide. Residues Ile-20–Arg-172 constitute a propeptide that is removed on maturation. Intrachain disulfides connect Cys-178-Cys-250 and Cys-257-Cys-275. His-300 contributes to the Zn(2+) binding site. Residue Glu-301 is part of the active site. His-304 and Asp-315 together coordinate Zn(2+).

This sequence belongs to the peptidase M35 family. It depends on Zn(2+) as a cofactor.

The protein localises to the secreted. It catalyses the reaction Preferential cleavage of bonds with hydrophobic residues in P1'. Also 3-Asn-|-Gln-4 and 8-Gly-|-Ser-9 bonds in insulin B chain.. Its function is as follows. Secreted metalloproteinase that allows assimilation of proteinaceous substrates. Shows high activities on basic nuclear substrates such as histone and protamine. This chain is Neutral protease 2 homolog ACLA_052720, found in Aspergillus clavatus (strain ATCC 1007 / CBS 513.65 / DSM 816 / NCTC 3887 / NRRL 1 / QM 1276 / 107).